The following is a 91-amino-acid chain: Lipolysis-activating peptide 1-alpha chain (91 aa).

Positions 1 to 21 are cleaved as a signal peptide; it reads MNIKLFCFLSILISLTGLSLS. An LCN-type CS-alpha/beta domain is found at 23–87; sequence DDGNYPIDAN…FFDAYKTYCK (65 aa). 3 cysteine pairs are disulfide-bonded: C38–C61, C47–C66, and C51–C68.

Belongs to the long (3 C-C) scorpion toxin superfamily. As to quaternary structure, heterodimer of this alpha chain and a beta chain (AC D9U2A2). In terms of tissue distribution, expressed by the venom gland.

The protein localises to the secreted. The heterodimer LVP1 induces lipolysis in rat adipocytes. Induction of lipolysis by LVP1 appears to be mediated through the beta-2 adrenergic receptor pathway (ADRB2). The polypeptide is Lipolysis-activating peptide 1-alpha chain (Lychas mucronatus (Chinese swimming scorpion)).